A 440-amino-acid polypeptide reads, in one-letter code: Protein disulfide-isomerase A6 (440 aa).

A signal peptide spans 1–19 (MARLVLGLVSCTFFLAVSG). Thioredoxin domains lie at 20–133 (LYSS…ALRQ) and 151–287 (QGRG…EDIA). Cys55 and Cys58 are oxidised to a cystine. 3 positions are modified to phosphoserine: Ser129, Ser156, and Ser158. Residues 139–161 (LGGRSGGYSSGKQGRGDSSSKKD) are disordered. Over residues 152-161 (GRGDSSSKKD) the composition is skewed to basic and acidic residues. Residues Cys190 and Cys193 are joined by a disulfide bond. The segment at 399-440 (GGGSFPTITPREPWDGKDGELPVEDDIDLSDVELDDLEKDEL) is disordered. The segment covering 419 to 440 (LPVEDDIDLSDVELDDLEKDEL) has biased composition (acidic residues). Ser428 carries the phosphoserine modification. The Prevents secretion from ER signature appears at 437-440 (KDEL).

The protein belongs to the protein disulfide isomerase family. In terms of assembly, part of a large chaperone multiprotein complex comprising DNAJB11, HSP90B1, HSPA5, HYOU, PDIA2, PDIA4, PDIA6, PPIB, SDF2L1, UGGT1 and very small amounts of ERP29, but not, or at very low levels, CALR nor CANX. Interacts with MICA on the surface of tumor cells, leading to MICA disulfide bond reduction which is required for its release from tumor cells. Interacts with ITGB3 following platelet stimulation. Interacts with ERN1; the interaction is direct. Interacts with EIF2AK3.

The protein resides in the endoplasmic reticulum lumen. It is found in the cell membrane. The protein localises to the melanosome. The enzyme catalyses Catalyzes the rearrangement of -S-S- bonds in proteins.. Functionally, may function as a chaperone that inhibits aggregation of misfolded proteins. Negatively regulates the unfolded protein response (UPR) through binding to UPR sensors such as ERN1, which in turn inactivates ERN1 signaling. May also regulate the UPR via the EIF2AK3 UPR sensor. Plays a role in platelet aggregation and activation by agonists such as convulxin, collagen and thrombin. The polypeptide is Protein disulfide-isomerase A6 (Pdia6) (Mus musculus (Mouse)).